Here is a 602-residue protein sequence, read N- to C-terminus: Glutaminase liver isoform, mitochondrial (602 aa).

A mitochondrion-targeting transit peptide spans 1-14 (MRSMRALQNALSRA). 2 disordered regions span residues 1-28 (MRSM…HPSR) and 46-67 (QGRG…SNSG). Ser-219 contributes to the substrate binding site. Lys-253 bears the N6-succinyllysine mark. A substrate-binding site is contributed by Asn-268. N6-acetyllysine occurs at positions 279 and 284. The substrate site is built by Glu-314 and Asn-321. Lys-329 is modified (N6-acetyllysine). Substrate contacts are provided by Tyr-347, Tyr-399, and Val-417. ANK repeat units follow at residues 518–551 (DSRT…VKDR) and 552–585 (WGNI…SETQ).

Belongs to the glutaminase family. Homotetramer, dimer of dimers. Does not assemble into higher oligomers. Interacts with the PDZ domain of the syntrophin SNTA1. Interacts with the PDZ domain of TAX1BP3. As to expression, liver specific.

The protein localises to the mitochondrion. The catalysed reaction is L-glutamine + H2O = L-glutamate + NH4(+). Functionally, plays an important role in the regulation of glutamine catabolism. Promotes mitochondrial respiration and increases ATP generation in cells by catalyzing the synthesis of glutamate and alpha-ketoglutarate. Increases cellular anti-oxidant function via NADH and glutathione production. May play a role in preventing tumor proliferation. In Rattus norvegicus (Rat), this protein is Glutaminase liver isoform, mitochondrial (Gls2).